Here is a 226-residue protein sequence, read N- to C-terminus: Cytidylate kinase (226 aa).

14–22 serves as a coordination point for ATP; it reads GPAGAGKST.

Belongs to the cytidylate kinase family. Type 1 subfamily.

The protein localises to the cytoplasm. The catalysed reaction is CMP + ATP = CDP + ADP. The enzyme catalyses dCMP + ATP = dCDP + ADP. The chain is Cytidylate kinase from Symbiobacterium thermophilum (strain DSM 24528 / JCM 14929 / IAM 14863 / T).